The primary structure comprises 105 residues: MEIKIIEKKENPLLNRTEIKFECEYPTEGTPTILDVKHKLVALEDSSNDLLVVDSMKPSYGVPTAFGLAKIYDSTESLAKIETKSVIAKNEEPEEEPEEEAEDAE.

A disordered region spans residues 85 to 105; sequence SVIAKNEEPEEEPEEEAEDAE. Over residues 92–105 the composition is skewed to acidic residues; sequence EPEEEPEEEAEDAE.

Belongs to the eukaryotic ribosomal protein eS24 family.

The polypeptide is Small ribosomal subunit protein eS24 (Methanosphaera stadtmanae (strain ATCC 43021 / DSM 3091 / JCM 11832 / MCB-3)).